The chain runs to 67 residues: Phycobilisome 7.8 kDa linker polypeptide, allophycocyanin-associated, core (67 aa).

In terms of domain architecture, CpcD-like spans methionine 1–alanine 56.

The protein belongs to the phycobilisome linker protein family.

It localises to the cellular thylakoid membrane. Rod linker protein, associated with allophycocyanin. Linker polypeptides determine the state of aggregation and the location of the disk-shaped phycobiliprotein units within the phycobilisome and modulate their spectroscopic properties in order to mediate a directed and optimal energy transfer. This is Phycobilisome 7.8 kDa linker polypeptide, allophycocyanin-associated, core (apcC) from Synechocystis sp. (strain PCC 6714) (Aphanocapsa sp. (strain PCC 6714)).